We begin with the raw amino-acid sequence, 501 residues long: Probable cytosol aminopeptidase (501 aa).

Mn(2+) is bound by residues Lys257 and Asp262. Residue Lys269 is part of the active site. Residues Asp281, Asp341, and Glu343 each coordinate Mn(2+). Arg345 is a catalytic residue.

The protein belongs to the peptidase M17 family. Mn(2+) serves as cofactor.

The protein localises to the cytoplasm. It carries out the reaction Release of an N-terminal amino acid, Xaa-|-Yaa-, in which Xaa is preferably Leu, but may be other amino acids including Pro although not Arg or Lys, and Yaa may be Pro. Amino acid amides and methyl esters are also readily hydrolyzed, but rates on arylamides are exceedingly low.. It catalyses the reaction Release of an N-terminal amino acid, preferentially leucine, but not glutamic or aspartic acids.. Functionally, presumably involved in the processing and regular turnover of intracellular proteins. Catalyzes the removal of unsubstituted N-terminal amino acids from various peptides. The protein is Probable cytosol aminopeptidase of Synechococcus sp. (strain RCC307).